We begin with the raw amino-acid sequence, 445 residues long: Methylthioribose-1-phosphate isomerase (445 aa).

Asp286 (proton donor) is an active-site residue.

Belongs to the eIF-2B alpha/beta/delta subunits family. MtnA subfamily.

The protein localises to the cytoplasm. It localises to the nucleus. The catalysed reaction is 5-(methylsulfanyl)-alpha-D-ribose 1-phosphate = 5-(methylsulfanyl)-D-ribulose 1-phosphate. It participates in amino-acid biosynthesis; L-methionine biosynthesis via salvage pathway; L-methionine from S-methyl-5-thio-alpha-D-ribose 1-phosphate: step 1/6. Catalyzes the interconversion of methylthioribose-1-phosphate (MTR-1-P) into methylthioribulose-1-phosphate (MTRu-1-P). The protein is Methylthioribose-1-phosphate isomerase (mri1) of Sclerotinia sclerotiorum (strain ATCC 18683 / 1980 / Ss-1) (White mold).